A 365-amino-acid chain; its full sequence is ATP-dependent (S)-NAD(P)H-hydrate dehydratase (365 aa).

Residues 1–43 constitute a chloroplast transit peptide; that stretch reads MLVKPSIISGLVRLTSHSPSSSSSVLRRQEFLVRTLCGSPIIR. Position 2 is an N-acetylserine (Leu-2). A YjeF C-terminal domain is found at 53–361; sequence AESVLRTVTP…ECLGESLEDI (309 aa). Residues Gly-169 and 222–228 each bind (6S)-NADPHX; that span reads NVNEYKR. Residues 262–266 and 281–290 contribute to the ATP site; these read KGKSD and GSPRRCGGQG. Asp-291 contributes to the (6S)-NADPHX binding site.

It belongs to the NnrD/CARKD family. Requires Mg(2+) as cofactor.

It localises to the plastid. Its subcellular location is the chloroplast. The protein resides in the cytoplasm. The enzyme catalyses (6S)-NADHX + ATP = ADP + phosphate + NADH + H(+). It carries out the reaction (6S)-NADPHX + ATP = ADP + phosphate + NADPH + H(+). Catalyzes the dehydration of the S-form of NAD(P)HX at the expense of ATP, which is converted to ADP. Together with NAD(P)HX epimerase, which catalyzes the epimerization of the S- and R-forms, the enzyme allows the repair of both epimers of NAD(P)HX, a damaged form of NAD(P)H that is a result of enzymatic or heat-dependent hydration. The polypeptide is ATP-dependent (S)-NAD(P)H-hydrate dehydratase (Arabidopsis thaliana (Mouse-ear cress)).